The sequence spans 197 residues: MSSLLEQLIEAFRVLPGVGQKSAQRMAYHVLEREREGGRRLATTLANAVEKVGHCVQCRDFTESEICTICASSSRDRQQLCVVESPADRLAIEHATGYRGLYFVLQGRLSPLDGIGPRELGLDRLGERLAAGEVTEMIIATNATVEGEATAHYLAQLARQHAVRPSRLAQGMPLGGELEYVDRGTLSHAFGTRSEVL.

The C4-type zinc finger occupies cysteine 55 to cysteine 70. A Toprim domain is found at glutamine 78–proline 173.

It belongs to the RecR family.

In terms of biological role, may play a role in DNA repair. It seems to be involved in an RecBC-independent recombinational process of DNA repair. It may act with RecF and RecO. The chain is Recombination protein RecR from Xanthomonas oryzae pv. oryzae (strain MAFF 311018).